The primary structure comprises 309 residues: Olfactory receptor 5AC2 (309 aa).

The Extracellular portion of the chain corresponds to 1-27 (MDISEGNKTLVTEFVLTGLTDRPWLHV). N7 carries an N-linked (GlcNAc...) asparagine glycan. Residues 28–48 (LFFVVFLVVYLITMVGNLGLI) form a helical membrane-spanning segment. Over 49–56 (VLIWNDPH) the chain is Cytoplasmic. The helical transmembrane segment at 57–77 (LHMPMYLFLGGLAFSDACTST) threads the bilayer. Residues 78 to 101 (SITPRMLVNFLDKTAMISLAECIT) lie on the Extracellular side of the membrane. Cysteines 99 and 191 form a disulfide. Residues 102–122 (QFYFFASSATTECFLLVMMAY) traverse the membrane as a helical segment. Residues 123–135 (DRYVAICNPLLYP) are Cytoplasmic-facing. A helical transmembrane segment spans residues 136–156 (VMMSNKLSAQLLSISYVIGFL). At 157–198 (HPLVHVSLLLRLTFCRFNIIHYFYCEILQLFKISCNGPSINA) the chain is on the extracellular side. Residues 199-219 (LMIFIFGAFIQIPTLMTIIIS) traverse the membrane as a helical segment. At 220 to 239 (YTRVLFDILKKKSEKGRSKA) the chain is on the cytoplasmic side. Residues 240-260 (FSTCGAHLLSVSLYYGTLIFM) traverse the membrane as a helical segment. The Extracellular segment spans residues 261–273 (YVRPASGLAEDQD). Residues 274 to 294 (KVYSLFYTIIIPLLNPFIYSL) form a helical membrane-spanning segment. Residues 295–309 (RNKKVMHALRRVIRK) are Cytoplasmic-facing.

The protein belongs to the G-protein coupled receptor 1 family.

It is found in the cell membrane. In terms of biological role, odorant receptor. The protein is Olfactory receptor 5AC2 (OR5AC2) of Homo sapiens (Human).